A 795-amino-acid polypeptide reads, in one-letter code: Outer membrane protein assembly factor BamA (795 aa).

Residues 1–19 (MKKLLIASLLFGTTTTVFA) form the signal peptide. POTRA domains follow at residues 22 to 89 (FVAK…VVAK), 90 to 170 (SIIS…INED), 173 to 259 (AKLA…VNEG), 262 to 341 (YDLR…VDAG), and 344 to 418 (LTVR…VKER).

It belongs to the BamA family. In terms of assembly, part of the Bam complex.

Its subcellular location is the cell outer membrane. Functionally, part of the outer membrane protein assembly complex, which is involved in assembly and insertion of beta-barrel proteins into the outer membrane. The polypeptide is Outer membrane protein assembly factor BamA (Haemophilus influenzae (strain ATCC 51907 / DSM 11121 / KW20 / Rd)).